We begin with the raw amino-acid sequence, 487 residues long: GTPase Der (487 aa).

EngA-type G domains follow at residues 3–166 and 193–366; these read PVIA…PRDA and IKIA…KSAV. GTP-binding positions include 9-16, 56-60, 118-121, 199-206, 246-250, and 311-314; these read GRPNVGKS, DTGGI, NKID, DTAGV, and NKWD. One can recognise a KH-like domain in the interval 367 to 451; sequence TRWPTSRLTQ…PIRIEYKGGE (85 aa). The span at 448 to 461 shows a compositional bias: basic and acidic residues; it reads KGGENPYEGKKNTL. A disordered region spans residues 448–487; sequence KGGENPYEGKKNTLTDRQVNKKRRLMSHHKKAEKKRRDKR. Basic residues predominate over residues 467–487; sequence NKKRRLMSHHKKAEKKRRDKR.

Belongs to the TRAFAC class TrmE-Era-EngA-EngB-Septin-like GTPase superfamily. EngA (Der) GTPase family. In terms of assembly, associates with the 50S ribosomal subunit.

Functionally, GTPase that plays an essential role in the late steps of ribosome biogenesis. The chain is GTPase Der from Pseudomonas putida (strain W619).